Reading from the N-terminus, the 172-residue chain is Shikimate kinase (172 aa).

11-16 (GAGKST) lines the ATP pocket. Position 15 (S15) interacts with Mg(2+). The substrate site is built by D33, R57, and G79. R117 serves as a coordination point for ATP. R136 serves as a coordination point for substrate. R153 contributes to the ATP binding site.

This sequence belongs to the shikimate kinase family. In terms of assembly, monomer. Mg(2+) is required as a cofactor.

The protein localises to the cytoplasm. The enzyme catalyses shikimate + ATP = 3-phosphoshikimate + ADP + H(+). The protein operates within metabolic intermediate biosynthesis; chorismate biosynthesis; chorismate from D-erythrose 4-phosphate and phosphoenolpyruvate: step 5/7. Functionally, catalyzes the specific phosphorylation of the 3-hydroxyl group of shikimic acid using ATP as a cosubstrate. This is Shikimate kinase from Pseudomonas paraeruginosa (strain DSM 24068 / PA7) (Pseudomonas aeruginosa (strain PA7)).